Here is a 217-residue protein sequence, read N- to C-terminus: Somatotropin (217 aa).

An N-terminal signal peptide occupies residues 1–27 (MMAAGPRASLLLAFALLCLPWTQEVGA). His-46 contacts Zn(2+). Cys-79 and Cys-190 are disulfide-bonded. Ser-132 is subject to Phosphoserine. Glu-199 lines the Zn(2+) pocket. Cys-207 and Cys-215 are oxidised to a cystine.

This sequence belongs to the somatotropin/prolactin family.

The protein resides in the secreted. In terms of biological role, plays an important role in growth control. Its major role in stimulating body growth is to stimulate the liver and other tissues to secrete IGF1. It stimulates both the differentiation and proliferation of myoblasts. It also stimulates amino acid uptake and protein synthesis in muscle and other tissues. This Cervus elaphus (Red deer) protein is Somatotropin (GH1).